We begin with the raw amino-acid sequence, 824 residues long: Probable acyl-CoA dehydrogenase IBR3 (824 aa).

An N-acetylglycine modification is found at Gly2. Residues 555–565, 589–591, Arg706, Gln776, and 776–780 each bind FAD; these read FAMTEPQVASS, WTS, and QVHGA. The Microbody targeting signal motif lies at 822–824; that stretch reads SKL.

Belongs to the acyl-CoA dehydrogenase family. FAD is required as a cofactor.

The protein localises to the peroxisome. It carries out the reaction a 2,3-saturated acyl-CoA + A = a 2,3-dehydroacyl-CoA + AH2. Its function is as follows. Involved with IBR1 and IBR10 in the peroxisomal beta-oxidation of indole-3-butyric acid (IBA) to form indole-3-acetic acid (IAA), a biologically active auxin. May be responsible for catalyzing the first step in IBA-CoA beta-oxidation. May play a role in defense response to pathogenic bacteria. This chain is Probable acyl-CoA dehydrogenase IBR3, found in Arabidopsis thaliana (Mouse-ear cress).